The primary structure comprises 323 residues: Aspartate carbamoyltransferase catalytic subunit (323 aa).

Carbamoyl phosphate is bound by residues R71 and T72. An L-aspartate-binding site is contributed by K99. The carbamoyl phosphate site is built by R121, H151, and Q154. 2 residues coordinate L-aspartate: R184 and R239. Residues G280 and P281 each coordinate carbamoyl phosphate.

It belongs to the aspartate/ornithine carbamoyltransferase superfamily. ATCase family. Heterododecamer (2C3:3R2) of six catalytic PyrB chains organized as two trimers (C3), and six regulatory PyrI chains organized as three dimers (R2).

The enzyme catalyses carbamoyl phosphate + L-aspartate = N-carbamoyl-L-aspartate + phosphate + H(+). It participates in pyrimidine metabolism; UMP biosynthesis via de novo pathway; (S)-dihydroorotate from bicarbonate: step 2/3. Its function is as follows. Catalyzes the condensation of carbamoyl phosphate and aspartate to form carbamoyl aspartate and inorganic phosphate, the committed step in the de novo pyrimidine nucleotide biosynthesis pathway. In Ralstonia pickettii (strain 12J), this protein is Aspartate carbamoyltransferase catalytic subunit.